A 305-amino-acid chain; its full sequence is uncharacterized protein (305 aa).

The segment at 255-305 is disordered; sequence RCHRAGLRSPPRTREPLWSLGPSGGEAAGEAPGGKGPPTPVLPHARRAGAA. Positions 276 to 288 are enriched in gly residues; the sequence is PSGGEAAGEAPGG.

This is an uncharacterized protein from Streptomyces fradiae (Streptomyces roseoflavus).